The primary structure comprises 238 residues: Tetraspanin-4 (238 aa).

Residues 1–13 (MARGCLQGVKYLM) are Cytoplasmic-facing. Residues 14–34 (FAFNLLFWLGGCGVLGVGIWL) traverse the membrane as a helical segment. At 35 to 55 (AATQGNFATLSSSFPSLSAAN) the chain is on the extracellular side. The chain crosses the membrane as a helical span at residues 56–76 (LLIVTGTFVMAIGFVGCIGAL). Residues 77–85 (KENKCLLLT) are Cytoplasmic-facing. A helical membrane pass occupies residues 86 to 106 (FFVLLLLVFLLEATIAVLFFA). Residues 107 to 201 (YSDKIDSYAQ…ETVKAWLQEN (95 aa)) are Extracellular-facing. Residues asparagine 152 and asparagine 161 are each glycosylated (N-linked (GlcNAc...) asparagine). Residues 202-222 (LLAVGIFGLCTALVQILGLTF) form a helical membrane-spanning segment. Residues 223–238 (AMTMYCQVVKADTYCA) are Cytoplasmic-facing.

This sequence belongs to the tetraspanin (TM4SF) family. In terms of assembly, forms a complex with integrins.

The protein resides in the membrane. This chain is Tetraspanin-4 (Tspan4), found in Mus musculus (Mouse).